The sequence spans 213 residues: N-(5'-phosphoribosyl)anthranilate isomerase (213 aa).

Belongs to the TrpF family.

It carries out the reaction N-(5-phospho-beta-D-ribosyl)anthranilate = 1-(2-carboxyphenylamino)-1-deoxy-D-ribulose 5-phosphate. It participates in amino-acid biosynthesis; L-tryptophan biosynthesis; L-tryptophan from chorismate: step 3/5. The sequence is that of N-(5'-phosphoribosyl)anthranilate isomerase from Caulobacter sp. (strain K31).